Here is a 246-residue protein sequence, read N- to C-terminus: Exosome complex component Rrp41 (246 aa).

This sequence belongs to the RNase PH family. Rrp41 subfamily. In terms of assembly, component of the archaeal exosome complex. Forms a hexameric ring-like arrangement composed of 3 Rrp41-Rrp42 heterodimers. The hexameric ring associates with a trimer of Rrp4 and/or Csl4 subunits.

Its subcellular location is the cytoplasm. Its function is as follows. Catalytic component of the exosome, which is a complex involved in RNA degradation. Has 3'-&gt;5' exoribonuclease activity. Can also synthesize heteromeric RNA-tails. In Pyrobaculum calidifontis (strain DSM 21063 / JCM 11548 / VA1), this protein is Exosome complex component Rrp41.